The sequence spans 191 residues: HTH-type transcriptional regulator SAR0097 (191 aa).

One can recognise an HTH tetR-type domain in the interval 12 to 74; that stretch reads AEYNQQIILT…AIMDKKVDQM (63 aa). A DNA-binding region (H-T-H motif) is located at residues 37–56; that stretch reads KMSDIAKISGVGVGTLYRHF.

In Staphylococcus aureus (strain MRSA252), this protein is HTH-type transcriptional regulator SAR0097.